The primary structure comprises 456 residues: Imidazolonepropionase (456 aa).

Residues histidine 104 and histidine 106 each contribute to the Fe(3+) site. The Zn(2+) site is built by histidine 104 and histidine 106. Residues arginine 113, tyrosine 176, and histidine 209 each coordinate 4-imidazolone-5-propanoate. Tyrosine 176 contributes to the N-formimidoyl-L-glutamate binding site. Fe(3+) is bound at residue histidine 274. Histidine 274 contributes to the Zn(2+) binding site. Glutamine 277 contributes to the 4-imidazolone-5-propanoate binding site. Fe(3+) is bound at residue aspartate 349. Aspartate 349 is a Zn(2+) binding site. N-formimidoyl-L-glutamate contacts are provided by asparagine 351 and glycine 353. Serine 354 contributes to the 4-imidazolone-5-propanoate binding site.

This sequence belongs to the metallo-dependent hydrolases superfamily. HutI family. It depends on Zn(2+) as a cofactor. Fe(3+) serves as cofactor.

The protein resides in the cytoplasm. The enzyme catalyses 4-imidazolone-5-propanoate + H2O = N-formimidoyl-L-glutamate. Its pathway is amino-acid degradation; L-histidine degradation into L-glutamate; N-formimidoyl-L-glutamate from L-histidine: step 3/3. Catalyzes the hydrolytic cleavage of the carbon-nitrogen bond in imidazolone-5-propanoate to yield N-formimidoyl-L-glutamate. It is the third step in the universal histidine degradation pathway. This chain is Imidazolonepropionase, found in Verminephrobacter eiseniae (strain EF01-2).